The sequence spans 476 residues: Probable protein S-acyltransferase 5 (476 aa).

The span at 1–11 (MLDLQPSDRRH) shows a compositional bias: basic and acidic residues. The segment at 1-21 (MLDLQPSDRRHGAPSSSGGVS) is disordered. A run of 2 helical transmembrane segments spans residues 53 to 73 (SILI…IFVG) and 85 to 105 (GVSV…FLLL). A disordered region spans residues 119-138 (YPPEPESNEGNGEPRLAHTP). A DHHC domain is found at 158–208 (KYCDTCMLYRPPRASHCSICNNCVEKFDHHCPWLGQCIGLRNYRFYFMFVL). Residue cysteine 188 is the S-palmitoyl cysteine intermediate of the active site. Helical transmembrane passes span 209–223 (CSTL…FCWI) and 246–266 (SIAL…LTCF). Disordered regions lie at residues 320–340 (SKEP…PSLQ) and 373–454 (VASR…ASRD). Serine 336 is modified (phosphoserine). Basic and acidic residues predominate over residues 387-412 (SEGRGIMHSRESSRGRGIMHSRESSR). The residue at position 418 (serine 418) is a Phosphoserine. A compositionally biased stretch (basic and acidic residues) spans 425-441 (VNEDLRTRDESVSRVGE).

Belongs to the DHHC palmitoyltransferase family.

The protein resides in the cell membrane. The catalysed reaction is L-cysteinyl-[protein] + hexadecanoyl-CoA = S-hexadecanoyl-L-cysteinyl-[protein] + CoA. In terms of biological role, palmitoyl acyltransferase. The protein is Probable protein S-acyltransferase 5 (PAT05) of Arabidopsis thaliana (Mouse-ear cress).